The following is a 155-amino-acid chain: Arginine repressor (155 aa).

The protein belongs to the ArgR family.

It localises to the cytoplasm. It participates in amino-acid biosynthesis; L-arginine biosynthesis [regulation]. Its function is as follows. Regulates arginine biosynthesis genes. The sequence is that of Arginine repressor from Mannheimia succiniciproducens (strain KCTC 0769BP / MBEL55E).